The primary structure comprises 381 residues: Acetyl-CoA:oxalate CoA-transferase (381 aa).

His233 is an active-site residue.

Belongs to the CoA-transferase III family. As to quaternary structure, homodimer.

The enzyme catalyses oxalate + acetyl-CoA = oxalyl-CoA + acetate. Involved in the catabolism of oxalate and in the adapatation to low pH. ACOCT serves to prime the oxalate-induced acid tolerance response (ATR) cycle by producing substrate for oxalyl-CoA decarboxylase (OXC) and formyl-coenzyme A transferase (FCOCT). Catalyzes the reversible conversion of acetyl-CoA and oxalate to oxalyl-CoA and acetate. It can also use formyl-CoA and oxalate to produce oxalyl-CoA and formate with significantly reduced specific activity. This chain is Acetyl-CoA:oxalate CoA-transferase (yfdE), found in Escherichia coli (strain K12).